Reading from the N-terminus, the 252-residue chain is MKTVTVKDLVIGTGAPKIIVSLMAKDIASVKSEALAYREADFDILEWRVDHYADLSNVESVMAAAKILRETMPEKPLLFTFRSAKEGGEQAISTEAYIALNRAAIDSGLVDMIDLELFTGDDQVKETVAYAHAHDVKVVMSNHDFHKTPEAEEIIARLRKMQSFDADIPKIALMPQSTSDVLTLLAATLEMQEQYADRPIITMSMAKTGVISRLAGEVFGSAATFGAVKKASAPGQISVNDLRTVLTILHQA.

3-dehydroquinate contacts are provided by residues Ser21, 46 to 48 (EWR), and Arg82. Catalysis depends on His143, which acts as the Proton donor/acceptor. Lys170 serves as the catalytic Schiff-base intermediate with substrate. Arg213, Ser232, and Gln236 together coordinate 3-dehydroquinate.

This sequence belongs to the type-I 3-dehydroquinase family. As to quaternary structure, homodimer.

It carries out the reaction 3-dehydroquinate = 3-dehydroshikimate + H2O. The protein operates within metabolic intermediate biosynthesis; chorismate biosynthesis; chorismate from D-erythrose 4-phosphate and phosphoenolpyruvate: step 3/7. In terms of biological role, involved in the third step of the chorismate pathway, which leads to the biosynthesis of aromatic amino acids. Catalyzes the cis-dehydration of 3-dehydroquinate (DHQ) and introduces the first double bond of the aromatic ring to yield 3-dehydroshikimate. This Escherichia coli (strain K12 / MC4100 / BW2952) protein is 3-dehydroquinate dehydratase.